The following is a 194-amino-acid chain: Holliday junction branch migration complex subunit RuvA (194 aa).

A domain I region spans residues 1 to 63; it reads MFEYLKGTVA…EDELSLYGFM (63 aa). The segment at 64–142 is domain II; the sequence is SIEELDMFQK…KTNVVYDYTL (79 aa). The flexible linker stretch occupies residues 143 to 151; that stretch reads FNDDHKDDD. Residues 151 to 194 form a domain III region; sequence DEAVQALMALGYSKLESEKAVEAVRDMSLGTEDVIKRALKWLMK.

It belongs to the RuvA family. Homotetramer. Forms an RuvA(8)-RuvB(12)-Holliday junction (HJ) complex. HJ DNA is sandwiched between 2 RuvA tetramers; dsDNA enters through RuvA and exits via RuvB. An RuvB hexamer assembles on each DNA strand where it exits the tetramer. Each RuvB hexamer is contacted by two RuvA subunits (via domain III) on 2 adjacent RuvB subunits; this complex drives branch migration. In the full resolvosome a probable DNA-RuvA(4)-RuvB(12)-RuvC(2) complex forms which resolves the HJ.

The protein localises to the cytoplasm. In terms of biological role, the RuvA-RuvB-RuvC complex processes Holliday junction (HJ) DNA during genetic recombination and DNA repair, while the RuvA-RuvB complex plays an important role in the rescue of blocked DNA replication forks via replication fork reversal (RFR). RuvA specifically binds to HJ cruciform DNA, conferring on it an open structure. The RuvB hexamer acts as an ATP-dependent pump, pulling dsDNA into and through the RuvAB complex. HJ branch migration allows RuvC to scan DNA until it finds its consensus sequence, where it cleaves and resolves the cruciform DNA. This Alkaliphilus oremlandii (strain OhILAs) (Clostridium oremlandii (strain OhILAs)) protein is Holliday junction branch migration complex subunit RuvA.